The sequence spans 308 residues: Testis-specific Y-encoded protein 3 (308 aa).

The protein belongs to the nucleosome assembly protein (NAP) family.

It is found in the cytoplasm. The protein resides in the nucleus. Functionally, may be involved in sperm differentiation and proliferation. This chain is Testis-specific Y-encoded protein 3 (TSPY3), found in Homo sapiens (Human).